The primary structure comprises 471 residues: Trigger factor (471 aa).

In terms of domain architecture, PPIase FKBP-type spans 165 to 244 (GDFVSIDLRA…VQSVKERVLP (80 aa)). The disordered stretch occupies residues 407–471 (VTDASGNPVD…EATAEDPAKS (65 aa)). A compositionally biased stretch (acidic residues) spans 416-443 (DLEELVGGTEEDDVTEDATEDVTEDAAP).

Belongs to the FKBP-type PPIase family. Tig subfamily.

The protein localises to the cytoplasm. The catalysed reaction is [protein]-peptidylproline (omega=180) = [protein]-peptidylproline (omega=0). Functionally, involved in protein export. Acts as a chaperone by maintaining the newly synthesized protein in an open conformation. Functions as a peptidyl-prolyl cis-trans isomerase. This is Trigger factor from Kineococcus radiotolerans (strain ATCC BAA-149 / DSM 14245 / SRS30216).